Consider the following 242-residue polypeptide: Pyridoxine 5'-phosphate synthase (242 aa).

Asparagine 8 provides a ligand contact to 3-amino-2-oxopropyl phosphate. 10-11 (DH) provides a ligand contact to 1-deoxy-D-xylulose 5-phosphate. Arginine 19 contributes to the 3-amino-2-oxopropyl phosphate binding site. Histidine 44 serves as the catalytic Proton acceptor. Residues arginine 46 and histidine 51 each coordinate 1-deoxy-D-xylulose 5-phosphate. Glutamate 71 serves as the catalytic Proton acceptor. A 1-deoxy-D-xylulose 5-phosphate-binding site is contributed by threonine 101. The Proton donor role is filled by histidine 193. Residues glycine 194 and 215-216 (GF) each bind 3-amino-2-oxopropyl phosphate.

This sequence belongs to the PNP synthase family. Homooctamer; tetramer of dimers.

Its subcellular location is the cytoplasm. It carries out the reaction 3-amino-2-oxopropyl phosphate + 1-deoxy-D-xylulose 5-phosphate = pyridoxine 5'-phosphate + phosphate + 2 H2O + H(+). It participates in cofactor biosynthesis; pyridoxine 5'-phosphate biosynthesis; pyridoxine 5'-phosphate from D-erythrose 4-phosphate: step 5/5. Its function is as follows. Catalyzes the complicated ring closure reaction between the two acyclic compounds 1-deoxy-D-xylulose-5-phosphate (DXP) and 3-amino-2-oxopropyl phosphate (1-amino-acetone-3-phosphate or AAP) to form pyridoxine 5'-phosphate (PNP) and inorganic phosphate. This Elusimicrobium minutum (strain Pei191) protein is Pyridoxine 5'-phosphate synthase.